A 189-amino-acid chain; its full sequence is 7-methyl-GTP pyrophosphatase (189 aa).

Catalysis depends on Asp-71, which acts as the Proton acceptor.

It belongs to the Maf family. YceF subfamily. A divalent metal cation is required as a cofactor.

The protein resides in the cytoplasm. The enzyme catalyses N(7)-methyl-GTP + H2O = N(7)-methyl-GMP + diphosphate + H(+). Functionally, nucleoside triphosphate pyrophosphatase that hydrolyzes 7-methyl-GTP (m(7)GTP). May have a dual role in cell division arrest and in preventing the incorporation of modified nucleotides into cellular nucleic acids. The sequence is that of 7-methyl-GTP pyrophosphatase from Bdellovibrio bacteriovorus (strain ATCC 15356 / DSM 50701 / NCIMB 9529 / HD100).